The chain runs to 282 residues: Shikimate dehydrogenase (NADP(+)) (282 aa).

Residues 16–18 (SLS) and T63 each bind shikimate. K67 functions as the Proton acceptor in the catalytic mechanism. Residues N88 and D103 each contribute to the shikimate site. Residues 128–132 (GAGGA) and G243 each bind NADP(+).

Belongs to the shikimate dehydrogenase family. Homodimer.

It catalyses the reaction shikimate + NADP(+) = 3-dehydroshikimate + NADPH + H(+). The protein operates within metabolic intermediate biosynthesis; chorismate biosynthesis; chorismate from D-erythrose 4-phosphate and phosphoenolpyruvate: step 4/7. In terms of biological role, involved in the biosynthesis of the chorismate, which leads to the biosynthesis of aromatic amino acids. Catalyzes the reversible NADPH linked reduction of 3-dehydroshikimate (DHSA) to yield shikimate (SA). This Xylella fastidiosa (strain Temecula1 / ATCC 700964) protein is Shikimate dehydrogenase (NADP(+)).